Here is a 78-residue protein sequence, read N- to C-terminus: Acyl carrier protein (78 aa).

A Carrier domain is found at 2–77; sequence QNIEKKIKKI…SIFDIIKKYV (76 aa). At S37 the chain carries O-(pantetheine 4'-phosphoryl)serine.

This sequence belongs to the acyl carrier protein (ACP) family. Post-translationally, 4'-phosphopantetheine is transferred from CoA to a specific serine of apo-ACP by AcpS. This modification is essential for activity because fatty acids are bound in thioester linkage to the sulfhydryl of the prosthetic group.

The protein resides in the cytoplasm. It functions in the pathway lipid metabolism; fatty acid biosynthesis. Functionally, carrier of the growing fatty acid chain in fatty acid biosynthesis. The protein is Acyl carrier protein of Buchnera aphidicola subsp. Baizongia pistaciae (strain Bp).